The primary structure comprises 117 residues: Prefoldin subunit beta (117 aa).

Belongs to the prefoldin subunit beta family. In terms of assembly, heterohexamer of two alpha and four beta subunits.

The protein resides in the cytoplasm. Functionally, molecular chaperone capable of stabilizing a range of proteins. Seems to fulfill an ATP-independent, HSP70-like function in archaeal de novo protein folding. This chain is Prefoldin subunit beta, found in Thermococcus kodakarensis (strain ATCC BAA-918 / JCM 12380 / KOD1) (Pyrococcus kodakaraensis (strain KOD1)).